We begin with the raw amino-acid sequence, 210 residues long: dITP/XTP pyrophosphatase (210 aa).

13–18 (THNPGK) provides a ligand contact to substrate. The Mg(2+) site is built by Asp45 and Asp74. Asp74 serves as the catalytic Proton acceptor. Residues Ser75, 160 to 163 (FGYD), Lys183, and 195 to 196 (HR) each bind substrate.

This sequence belongs to the HAM1 NTPase family. In terms of assembly, homodimer. It depends on Mg(2+) as a cofactor.

The catalysed reaction is XTP + H2O = XMP + diphosphate + H(+). The enzyme catalyses dITP + H2O = dIMP + diphosphate + H(+). It carries out the reaction ITP + H2O = IMP + diphosphate + H(+). Its function is as follows. Pyrophosphatase that catalyzes the hydrolysis of nucleoside triphosphates to their monophosphate derivatives, with a high preference for the non-canonical purine nucleotides XTP (xanthosine triphosphate), dITP (deoxyinosine triphosphate) and ITP. Seems to function as a house-cleaning enzyme that removes non-canonical purine nucleotides from the nucleotide pool, thus preventing their incorporation into DNA/RNA and avoiding chromosomal lesions. In Rhodopseudomonas palustris (strain ATCC BAA-98 / CGA009), this protein is dITP/XTP pyrophosphatase.